We begin with the raw amino-acid sequence, 361 residues long: C3a anaphylatoxin chemotactic receptor (361 aa).

The Extracellular portion of the chain corresponds to 1 to 64 (MQQETQAPPL…FASSEVRVIS (64 aa)). Residues Asn-36 and Asn-50 are each glycosylated (N-linked (GlcNAc...) asparagine). Residues 65 to 85 (LVVYCLTFLLGVPGNSFVIFI) traverse the membrane as a helical segment. Over 86 to 96 (AGMKMKRTVNT) the chain is Cytoplasmic. A helical membrane pass occupies residues 97–117 (IWFLNLATADLLCCLSVPLTV). Residues 118–134 (AEILLDHHWPYGYAMCK) are Extracellular-facing. The cysteines at positions 133 and 210 are disulfide-linked. A helical membrane pass occupies residues 135-155 (ILPSVIVISMFASVFTLNIIS). The Cytoplasmic segment spans residues 156–177 (LDRFTQVITPVWAQNHRSLLLA). The helical transmembrane segment at 178-198 (RLSCVAVWILALLLSLPFMIL) threads the bilayer. The Extracellular segment spans residues 199–224 (RRTYEEFNMTVCTFDDDDFTTYGALS). A helical transmembrane segment spans residues 225–245 (IVRFVFGFLIPLMSIVTCYGI). Over 246–262 (IARKLGSRHFRSGRAFR) the chain is Cytoplasmic. Residues 263 to 283 (IMLAVIVAFFLCWMPYHVLDL) traverse the membrane as a helical segment. Residues 284 to 301 (IRSYGGESSSMVALKVDP) lie on the Extracellular side of the membrane. Residues 302–322 (LAISLAYVNSCLNPVLYVFMG) traverse the membrane as a helical segment. Over 323 to 361 (QDFKNKVQLSLRRVFERAFSEEGTQISRSTQSQQVHSVL) the chain is Cytoplasmic.

This sequence belongs to the G-protein coupled receptor 1 family.

The protein resides in the cell membrane. In terms of biological role, receptor for the chemotactic and inflammatory peptide anaphylatoxin C3a. This receptor stimulates chemotaxis, granule enzyme release and superoxide anion production. The chain is C3a anaphylatoxin chemotactic receptor (c3ar1) from Danio rerio (Zebrafish).